A 258-amino-acid chain; its full sequence is 14-3-3-like protein 16R (258 aa).

The segment at 238 to 258 (DMQDDGTDEIKEAAPKPDNNE) is disordered. Over residues 245 to 258 (DEIKEAAPKPDNNE) the composition is skewed to basic and acidic residues.

It belongs to the 14-3-3 family.

This is 14-3-3-like protein 16R from Solanum tuberosum (Potato).